A 159-amino-acid chain; its full sequence is Transcriptional repressor NrdR (159 aa).

A zinc finger spans residues 3 to 34 (CPFCRHEDTQVVDSRVSEDGAAIRRRRRCSAC). The ATP-cone domain maps to 49 to 139 (PAVVKKDGSR…VYRRFEDVSE (91 aa)).

Belongs to the NrdR family. It depends on Zn(2+) as a cofactor.

Functionally, negatively regulates transcription of bacterial ribonucleotide reductase nrd genes and operons by binding to NrdR-boxes. This Burkholderia ambifaria (strain MC40-6) protein is Transcriptional repressor NrdR.